The following is a 160-amino-acid chain: Phosphatidylinositol N-acetylglucosaminyltransferase subunit gpi15 (160 aa).

The next 2 helical transmembrane spans lie at 22 to 42 (GTQM…SLAI) and 48 to 68 (IIIT…ISGV).

The protein belongs to the PIGH family.

It is found in the endoplasmic reticulum membrane. It catalyses the reaction a 1,2-diacyl-sn-glycero-3-phospho-(1D-myo-inositol) + UDP-N-acetyl-alpha-D-glucosamine = a 6-(N-acetyl-alpha-D-glucosaminyl)-1-(1,2-diacyl-sn-glycero-3-phospho)-1D-myo-inositol + UDP + H(+). It participates in glycolipid biosynthesis; glycosylphosphatidylinositol-anchor biosynthesis. Functionally, part of the complex catalyzing the transfer of N-acetylglucosamine from UDP-N-acetylglucosamine to phosphatidylinositol, the first step of GPI biosynthesis. The sequence is that of Phosphatidylinositol N-acetylglucosaminyltransferase subunit gpi15 (gpi15) from Schizosaccharomyces pombe (strain 972 / ATCC 24843) (Fission yeast).